A 504-amino-acid polypeptide reads, in one-letter code: Glutamate--tRNA ligase (504 aa).

The 'HIGH' region motif lies at 14-24 (PSPTGYLHVGG). Positions 261–265 (KLSKR) match the 'KMSKS' region motif. Lys264 is a binding site for ATP.

This sequence belongs to the class-I aminoacyl-tRNA synthetase family. Glutamate--tRNA ligase type 1 subfamily. As to quaternary structure, monomer.

It localises to the cytoplasm. It catalyses the reaction tRNA(Glu) + L-glutamate + ATP = L-glutamyl-tRNA(Glu) + AMP + diphosphate. Catalyzes the attachment of glutamate to tRNA(Glu) in a two-step reaction: glutamate is first activated by ATP to form Glu-AMP and then transferred to the acceptor end of tRNA(Glu). The sequence is that of Glutamate--tRNA ligase from Chlorobium luteolum (strain DSM 273 / BCRC 81028 / 2530) (Pelodictyon luteolum).